The sequence spans 127 residues: Holo-[acyl-carrier-protein] synthase (127 aa).

Mg(2+) contacts are provided by Asp9 and Glu58.

It belongs to the P-Pant transferase superfamily. AcpS family. It depends on Mg(2+) as a cofactor.

It is found in the cytoplasm. It carries out the reaction apo-[ACP] + CoA = holo-[ACP] + adenosine 3',5'-bisphosphate + H(+). Functionally, transfers the 4'-phosphopantetheine moiety from coenzyme A to a Ser of acyl-carrier-protein. This is Holo-[acyl-carrier-protein] synthase from Shewanella putrefaciens (strain CN-32 / ATCC BAA-453).